Here is a 133-residue protein sequence, read N- to C-terminus: Small ribosomal subunit protein uS11 (133 aa).

The segment at Met-1–Gly-23 is disordered. Residues Gly-7 to Lys-17 show a composition bias toward basic residues.

This sequence belongs to the universal ribosomal protein uS11 family. Part of the 30S ribosomal subunit. Interacts with proteins S7 and S18. Binds to IF-3.

Functionally, located on the platform of the 30S subunit, it bridges several disparate RNA helices of the 16S rRNA. Forms part of the Shine-Dalgarno cleft in the 70S ribosome. This is Small ribosomal subunit protein uS11 from Arthrobacter sp. (strain FB24).